The primary structure comprises 234 residues: Glucosamine-6-phosphate deaminase (234 aa).

Asp-63 serves as the catalytic Proton acceptor; for enolization step. The active-site For ring-opening step is the Asn-129. His-131 acts as the Proton acceptor; for ring-opening step in catalysis. Glu-136 serves as the catalytic For ring-opening step.

Belongs to the glucosamine/galactosamine-6-phosphate isomerase family. NagB subfamily.

The enzyme catalyses alpha-D-glucosamine 6-phosphate + H2O = beta-D-fructose 6-phosphate + NH4(+). Its pathway is amino-sugar metabolism; N-acetylneuraminate degradation; D-fructose 6-phosphate from N-acetylneuraminate: step 5/5. Catalyzes the reversible isomerization-deamination of glucosamine 6-phosphate (GlcN6P) to form fructose 6-phosphate (Fru6P) and ammonium ion. This chain is Glucosamine-6-phosphate deaminase, found in Listeria welshimeri serovar 6b (strain ATCC 35897 / DSM 20650 / CCUG 15529 / CIP 8149 / NCTC 11857 / SLCC 5334 / V8).